The primary structure comprises 119 residues: Large ribosomal subunit protein uL22c (119 aa).

Belongs to the universal ribosomal protein uL22 family. Part of the 50S ribosomal subunit.

The protein resides in the plastid. It localises to the chloroplast. In terms of biological role, this protein binds specifically to 23S rRNA. The globular domain of the protein is located near the polypeptide exit tunnel on the outside of the subunit, while an extended beta-hairpin is found that lines the wall of the exit tunnel in the center of the 70S ribosome. The chain is Large ribosomal subunit protein uL22c (rpl22) from Marchantia polymorpha (Common liverwort).